A 314-amino-acid polypeptide reads, in one-letter code: Thymidylate synthase (314 aa).

DUMP-binding positions include arginine 21 and 176 to 177; that span reads RR. Cysteine 196 (nucleophile) is an active-site residue. Residues 216-219, asparagine 227, and 257-259 contribute to the dUMP site; these read RSAD and HLY. Aspartate 219 is a (6R)-5,10-methylene-5,6,7,8-tetrahydrofolate binding site. (6R)-5,10-methylene-5,6,7,8-tetrahydrofolate is bound at residue serine 313.

The protein belongs to the thymidylate synthase family. Bacterial-type ThyA subfamily. As to quaternary structure, homodimer.

It localises to the cytoplasm. It carries out the reaction dUMP + (6R)-5,10-methylene-5,6,7,8-tetrahydrofolate = 7,8-dihydrofolate + dTMP. It participates in pyrimidine metabolism; dTTP biosynthesis. In terms of biological role, catalyzes the reductive methylation of 2'-deoxyuridine-5'-monophosphate (dUMP) to 2'-deoxythymidine-5'-monophosphate (dTMP) while utilizing 5,10-methylenetetrahydrofolate (mTHF) as the methyl donor and reductant in the reaction, yielding dihydrofolate (DHF) as a by-product. This enzymatic reaction provides an intracellular de novo source of dTMP, an essential precursor for DNA biosynthesis. This is Thymidylate synthase from Listeria innocua serovar 6a (strain ATCC BAA-680 / CLIP 11262).